We begin with the raw amino-acid sequence, 463 residues long: NADH-quinone oxidoreductase subunit N (463 aa).

14 helical membrane passes run 2-22, 25-45, 61-81, 91-110, 114-133, 149-169, 189-209, 223-243, 264-284, 292-312, 317-337, 362-382, 395-415, and 434-454; these read NTLI…ILNF, GIVP…FYEF, FSTA…ALSH, ISDF…AMVS, LAMF…VLAA, FLMG…IYGA, IWFP…IAAV, PALT…ATLF, FTNV…IMAL, MLAF…LTIA, VLLY…SVIL, AAIL…SGFF, GYVA…GYYF, and PFLI…LGLF.

This sequence belongs to the complex I subunit 2 family. In terms of assembly, NDH-1 is composed of 14 different subunits. Subunits NuoA, H, J, K, L, M, N constitute the membrane sector of the complex.

It is found in the cell inner membrane. The catalysed reaction is a quinone + NADH + 5 H(+)(in) = a quinol + NAD(+) + 4 H(+)(out). In terms of biological role, NDH-1 shuttles electrons from NADH, via FMN and iron-sulfur (Fe-S) centers, to quinones in the respiratory chain. The immediate electron acceptor for the enzyme in this species is believed to be a menaquinone. Couples the redox reaction to proton translocation (for every two electrons transferred, four hydrogen ions are translocated across the cytoplasmic membrane), and thus conserves the redox energy in a proton gradient. The chain is NADH-quinone oxidoreductase subunit N from Flavobacterium johnsoniae (strain ATCC 17061 / DSM 2064 / JCM 8514 / BCRC 14874 / CCUG 350202 / NBRC 14942 / NCIMB 11054 / UW101) (Cytophaga johnsonae).